The sequence spans 79 residues: UPF0180 protein BCAH820_1484 (79 aa).

Belongs to the UPF0180 family.

This chain is UPF0180 protein BCAH820_1484, found in Bacillus cereus (strain AH820).